The chain runs to 616 residues: Xaa-Pro aminopeptidase app-1 (616 aa).

A peptide contacts are provided by Arg78 and His392. Residues Asp413, Asp424, and His487 each coordinate Zn(2+). 3 residues coordinate a peptide: His487, His496, and Glu522. Glu522 and Glu536 together coordinate Zn(2+).

This sequence belongs to the peptidase M24B family. In terms of assembly, homodimer. May interact with pid-2, pid-4 and pid-5. Zn(2+) is required as a cofactor. Specifically expressed in the intestine.

It is found in the cytoplasm. The enzyme catalyses Release of any N-terminal amino acid, including proline, that is linked to proline, even from a dipeptide or tripeptide.. Strongly inhibited by the metal ion chelators EDTA and 1,10-phenanthroline. Also inhibited by apstatin. Activity towards bradykinin is inhibited by Mn(2+) and Zn(2+) at all concentrations tested, whereas Co(2+) is inhibitory at concentrations above 100 uM and activatory at 10 uM. Catalyzes the removal of a penultimate prolyl residue from the N-termini of peptides, such as Arg-Pro-Pro. Has activity towards the flp-9 neuropeptide KPSFVRF-amide. This is Xaa-Pro aminopeptidase app-1 from Caenorhabditis elegans.